The chain runs to 826 residues: (2S)-3-sulfopropanediol dehydratase (826 aa).

One can recognise a PFL domain in the interval 33–695; that stretch reads PRVNRLRQAF…NTNASIDGRK (663 aa). Cys-464 (cysteine radical intermediate) is an active-site residue. Glu-466 (proton acceptor) is an active-site residue. The Glycine radical domain occupies 706-826; the sequence is PVHTDGGSHD…DLIQRTELHF (121 aa). Gly-802 bears the Glycine radical mark.

Belongs to the glycyl radical enzyme (GRE) family. Post-translationally, requires the activating protein HpfH to generate the key active site glycyl radical on Gly-802 that is involved in catalysis.

The catalysed reaction is (2S)-3-sulfopropanediol = 3-oxopropane-1-sulfonate + H2O. Its pathway is organosulfur degradation; alkanesulfonate degradation. In terms of biological role, involved in the degradation of the organosulfur compound 2(S)-dihydroxypropanesulfonate (DHPS). Catalyzes the radical-mediated dehydration of DHPS to produce 3-sulfopropionaldehyde (3-oxopropane-1-sulfonate). The chain is (2S)-3-sulfopropanediol dehydratase from Klebsiella oxytoca.